A 102-amino-acid chain; its full sequence is Small ribosomal subunit protein bS18 (102 aa).

This sequence belongs to the bacterial ribosomal protein bS18 family. As to quaternary structure, part of the 30S ribosomal subunit. Forms a tight heterodimer with protein bS6.

Binds as a heterodimer with protein bS6 to the central domain of the 16S rRNA, where it helps stabilize the platform of the 30S subunit. This Orientia tsutsugamushi (strain Boryong) (Rickettsia tsutsugamushi) protein is Small ribosomal subunit protein bS18.